The sequence spans 425 residues: Palmitoyltransferase ZDHHC23 (425 aa).

Residues 1 to 81 (MKPVKKKKTE…RIPWLRGAKK (81 aa)) are Cytoplasmic-facing. The helical transmembrane segment at 82–99 (VNISIVPPLVLLPVFLHV) threads the bilayer. At 100–102 (ASW) the chain is on the lumenal side. Residues 103–125 (HFLLGVVVLTSLPMLALWYYYLT) traverse the membrane as a helical segment. At 126 to 130 (HRRKE) the chain is on the cytoplasmic side. The chain crosses the membrane as a helical span at residues 131–151 (QTLFFLSLGLFSLGYMYYVFL). At 152-159 (REVVPQGR) the chain is on the lumenal side. The chain crosses the membrane as a helical span at residues 160-180 (VGPTQLALLTCGLLLILLALY). At 181 to 292 (RAKKNPGYLS…NSCVGESNHQ (112 aa)) the chain is on the cytoplasmic side. The DHHC domain occupies 249 to 299 (DWCAKCQLVRPARAWHCRICGICVRRMDHHCVWINSCVGESNHQAFILALS). Cysteine 279 serves as the catalytic S-palmitoyl cysteine intermediate. Residues 293–313 (AFILALSIFLLTSVYGISLTL) form a helical membrane-spanning segment. Topologically, residues 314–343 (NTICRDRSLFTALFYCPGVYANYSSALSFT) are lumenal. A helical transmembrane segment spans residues 344-364 (CVWYSVIITAGMAYIFLIQLI). The Cytoplasmic segment spans residues 365 to 425 (NISYNVTERE…TVHTPAEDIV (61 aa)). The segment at 422–425 (EDIV) is interaction with NOS1.

Belongs to the DHHC palmitoyltransferase family. Interacts with NOS1. Expressed in the brain.

The protein localises to the golgi apparatus membrane. It is found in the golgi apparatus. The protein resides in the trans-Golgi network membrane. It catalyses the reaction L-cysteinyl-[protein] + hexadecanoyl-CoA = S-hexadecanoyl-L-cysteinyl-[protein] + CoA. Functionally, palmitoyltransferase that could catalyze the addition of palmitate onto various protein substrates and be involved in a variety of cellular processes. Palmitoyltransferase that mediates palmitoylation of KCNMA1, regulating localization of KCNMA1 to the plasma membrane. May be involved in NOS1 regulation and targeting to the synaptic membrane. The polypeptide is Palmitoyltransferase ZDHHC23 (Mus musculus (Mouse)).